A 147-amino-acid chain; its full sequence is Ribonuclease H (147 aa).

An RNase H type-1 domain is found at 1-142 (MAGKVVMYTD…ADELANRGVR (142 aa)). 4 residues coordinate Mg(2+): D10, E48, D70, and D134.

It belongs to the RNase H family. Monomer. The cofactor is Mg(2+).

It localises to the cytoplasm. The enzyme catalyses Endonucleolytic cleavage to 5'-phosphomonoester.. Functionally, endonuclease that specifically degrades the RNA of RNA-DNA hybrids. In Marinobacter nauticus (strain ATCC 700491 / DSM 11845 / VT8) (Marinobacter aquaeolei), this protein is Ribonuclease H.